The following is a 263-amino-acid chain: Coiled-coil domain-containing protein 172 (263 aa).

Residues 13–191 adopt a coiled-coil conformation; the sequence is TEHQAEESRR…LKVLKDEETE (179 aa).

This sequence belongs to the CCDC172 family. May interact with TEKT2. In terms of tissue distribution, detected in spermatozoa (at protein level). Predominantly expressed in testis and in spermatozoa from the caput and corpus epididymis.

It is found in the cytoplasm. The protein localises to the cell projection. The protein resides in the cilium. The sequence is that of Coiled-coil domain-containing protein 172 (Ccdc172) from Rattus norvegicus (Rat).